Consider the following 172-residue polypeptide: Small ribosomal subunit protein uS5 (172 aa).

An S5 DRBM domain is found at 17-80 (MREKMIAVNR…EEARRKMIKV (64 aa)).

It belongs to the universal ribosomal protein uS5 family. Part of the 30S ribosomal subunit. Contacts proteins S4 and S8.

Its function is as follows. With S4 and S12 plays an important role in translational accuracy. Located at the back of the 30S subunit body where it stabilizes the conformation of the head with respect to the body. The polypeptide is Small ribosomal subunit protein uS5 (Herminiimonas arsenicoxydans).